A 218-amino-acid chain; its full sequence is Large ribosomal subunit protein bL25 (218 aa).

The tract at residues 185–218 (ARAAEEEAPAAEETTAEPELVRERREPRAEEEEE) is disordered. The span at 190–200 (EEAPAAEETTA) shows a compositional bias: acidic residues. A compositionally biased stretch (basic and acidic residues) spans 203-212 (ELVRERREPR).

The protein belongs to the bacterial ribosomal protein bL25 family. CTC subfamily. Part of the 50S ribosomal subunit; part of the 5S rRNA/L5/L18/L25 subcomplex. Contacts the 5S rRNA. Binds to the 5S rRNA independently of L5 and L18.

Its function is as follows. This is one of the proteins that binds to the 5S RNA in the ribosome where it forms part of the central protuberance. In Roseiflexus castenholzii (strain DSM 13941 / HLO8), this protein is Large ribosomal subunit protein bL25.